Consider the following 1150-residue polypeptide: MAQFGGQKNPPWATQFTATAVSQPAALGVQQPSLLGASPTIYTQQTALAAAGLTTQTPANYQLTQTAALQQQAAAAAAALQQQYSQPQQALYSVQQQLQQPQQTLLTQPAVALPTSLSLSTPQPTAQITVSYPTPRSSQQQTQPQKQRVFTGVVTKLHDTFGFVDEDVFFQLSAVKGKTPQVGDRVLVEATYNPNMPFKWNAQRIQTLPNQNQSQTQPLLKTPPAVLQPIAPQTTFGVQTQPQPQSLLQAQISAASITPLLQTQPQPLLQQPQQKAGLLQPPVRIVSQPQPARRLDPPSRFSGRNDRGDQVPNRKDDRSRERERERRRSRERSPQRKRSRERSPRRERERSPRRVRRVVPRYTVQFSKFSLDCPSCDMMELRRRYQNLYIPSDFFDAQFTWVDAFPLSRPFQLGNYCNFYVMHREVESLEKNMAILDPPDADHLYSAKVMLMASPSMEDLYHKSCALAEDPQELRDGFQHPARLVKFLVGMKGKDEAMAIGGHWSPSLDGPDPEKDPSVLIKTAIRCCKALTGIDLSVCTQWYRFAEIRYHRPEETHKGRTVPAHVETVVLFFPDVWHCLPTRSEWETLSRGYKQQLVEKLQGERKEADGEQDEEEKDDGEAKEISTPTHWSKLDPKTMKVNDLRKELESRALSSKGLKSQLIARLTKQLKVEEQKEEQKELEKSEKEEDEDDDRKSEDDKEEEERKRQEEIERQRRERRYILPDEPAIIVHPNWAAKSGKFDCSIMSLSVLLDYRLEDNKEHSFEVSLFAELFNEMLQRDFGVRIYKSLLSLPEKEDKKEKDKKSKKDERKDKKEERDDETDEPKPKRRKSGDDKDKKEDRDERKKEDKRKDDSKDDDETEEDNNQDEYDPMEAEEAEDEEDDRDEEEMTKRDDKRDINRYCKERPSKDKEKEKTQMITINRDLLMAFVYFDQSHCGYLLEKDLEEILYTLGLHLSRAQVKKLLNKVVLRESCFYRKLTDTSKDEENHEESESLQEDMLGNRLLLPTPTVKQESKDVEENVGLIVYNGAMVDVGSLLQKLEKSEKVRAEVEQKLQLLEEKTDEDEKTILNLENSNKSLSGELREVKKDLSQLQENLKISENMNLQFENQMNKTIRNLSTVMDEIHTVLKKDNVKNEDKDQKSKENGASV.

Residues 1 to 249 are interaction with AR; it reads MAQFGGQKNP…TQPQPQSLLQ (249 aa). Disordered regions lie at residues 124-146 and 285-354; these read PTAQ…QPQK and IVSQ…SPRR. Positions 134-146 are enriched in low complexity; it reads TPRSSQQQTQPQK. The interaction with GATA2 stretch occupies residues 203–660; sequence QRIQTLPNQN…RALSSKGLKS (458 aa). 2 stretches are compositionally biased toward basic and acidic residues: residues 293–334 and 341–352; these read RRLD…ERSP and ERSPRRERERSP. Residue S456 is modified to Phosphoserine. Positions 594-618 form a coiled coil; it reads KQQLVEKLQGERKEADGEQDEEEKD. The tract at residues 600–638 is disordered; that stretch reads KLQGERKEADGEQDEEEKDDGEAKEISTPTHWSKLDPKT. Residues 610-621 are compositionally biased toward acidic residues; that stretch reads GEQDEEEKDDGE. Residue T627 is modified to Phosphothreonine. Residues 636–670 form the SAP domain; sequence PKTMKVNDLRKELESRALSSKGLKSQLIARLTKQL. K637 is covalently cross-linked (Glycyl lysine isopeptide (Lys-Gly) (interchain with G-Cter in ubiquitin)). The segment at 643–1150 is interaction with GATA1; sequence DLRKELESRA…QKSKENGASV (508 aa). Phosphothreonine is present on T667. 4 stretches are compositionally biased toward basic and acidic residues: residues 673–687, 694–713, 796–817, and 832–855; these read EEQK…KSEK, DRKS…EEIE, KEDK…KKEE, and SGDD…KDDS. Disordered regions lie at residues 673–713 and 796–915; these read EEQK…EEIE and KEDK…EKEK. Residues S685 and S697 each carry the phosphoserine modification. A compositionally biased stretch (acidic residues) spans 856–889; the sequence is KDDDETEEDNNQDEYDPMEAEEAEDEEDDRDEEE. Residue T861 is modified to Phosphothreonine. A compositionally biased stretch (basic and acidic residues) spans 890–915; that stretch reads MTKRDDKRDINRYCKERPSKDKEKEK. K1012 is covalently cross-linked (Glycyl lysine isopeptide (Lys-Gly) (interchain with G-Cter in SUMO1); alternate). K1012 participates in a covalent cross-link: Glycyl lysine isopeptide (Lys-Gly) (interchain with G-Cter in SUMO2); alternate. The stretch at 1033 to 1114 forms a coiled coil; it reads DVGSLLQKLE…LQFENQMNKT (82 aa). Residues K1067 and K1135 each participate in a glycyl lysine isopeptide (Lys-Gly) (interchain with G-Cter in SUMO2) cross-link.

Directly interacts with ESR1, NR3C1 and p53/TP53. Interacts (via N-terminus) with CALCOCO1. Interacts with MED1. Interacts with GATA1. Interacts with AR and GATA2. As to expression, expressed in various epithelial cancer cell lines, including breast, colon, prostate, pancreatic and leukemia. Expression is regulated by growth factors.

It localises to the cytoplasm. It is found in the perinuclear region. Its function is as follows. Associates with components of the Mediator and p160 coactivator complexes that play a role as intermediaries transducing regulatory signals from upstream transcriptional activator proteins to basal transcription machinery at the core promoter. Recruited to endogenous nuclear receptor target genes in response to the appropriate hormone. Also functions as a p53 coactivator. May thus play an important role in transcriptional regulation. May be involved in apoptosis signaling in the presence of the reinoid CD437. Apoptosis induction involves sequestration of 14-3-3 protein(s) and mediated altered expression of multiple cell cycle regulatory genes including MYC, CCNB1 and CDKN1A. Plays a role in cell cycle progression and/or cell proliferation. In association with CALCOCO1 enhances GATA1- and MED1-mediated transcriptional activation from the gamma-globin promoter during erythroid differentiation of K562 erythroleukemia cells. Can act as a both a coactivator and corepressor of AR-mediated transcription. Contributes to chromatin looping and AR transcription complex assembly by stabilizing AR-GATA2 association on chromatin and facilitating MED1 and RNA polymerase II recruitment to AR-binding sites. May play an important role in the growth and tumorigenesis of prostate cancer cells. The chain is Cell division cycle and apoptosis regulator protein 1 (CCAR1) from Homo sapiens (Human).